A 182-amino-acid polypeptide reads, in one-letter code: MTELPQARRLLKQGEWTGPAAGCVRLGYDERFLRRKRLETEAGDGFLVDLAETTSLDEGCAFELADGRLVEVRAAEEEVVAVTGPILRAAWHIGNRHTPCQIEADRLVIRRDHVLEEMLRGLGLTLEPRTEPFRPEGGAYGHGRTLGHDHGPAQGHGHDHPHVHVHISHKPDEDETPDADPA.

The segment at proline 128–alanine 182 is disordered. The span at leucine 146–histidine 162 shows a compositional bias: basic and acidic residues. Residues glutamate 173–alanine 182 are compositionally biased toward acidic residues.

Belongs to the UreE family.

Its subcellular location is the cytoplasm. Involved in urease metallocenter assembly. Binds nickel. Probably functions as a nickel donor during metallocenter assembly. The chain is Urease accessory protein UreE from Cereibacter sphaeroides (strain ATCC 17023 / DSM 158 / JCM 6121 / CCUG 31486 / LMG 2827 / NBRC 12203 / NCIMB 8253 / ATH 2.4.1.) (Rhodobacter sphaeroides).